The sequence spans 404 residues: Formate-dependent phosphoribosylglycinamide formyltransferase (404 aa).

N(1)-(5-phospho-beta-D-ribosyl)glycinamide contacts are provided by residues 25–26 (EL) and glutamate 85. ATP contacts are provided by residues arginine 118, lysine 159, 164-169 (SSGKGQ), 199-202 (EGFI), and glutamate 207. One can recognise an ATP-grasp domain in the interval 123–318 (RLAAEELGLP…EFELHARAIL (196 aa)). Positions 277 and 289 each coordinate Mg(2+). Residues aspartate 296, lysine 365, and 372–373 (RR) each bind N(1)-(5-phospho-beta-D-ribosyl)glycinamide.

Belongs to the PurK/PurT family. In terms of assembly, homodimer.

It carries out the reaction N(1)-(5-phospho-beta-D-ribosyl)glycinamide + formate + ATP = N(2)-formyl-N(1)-(5-phospho-beta-D-ribosyl)glycinamide + ADP + phosphate + H(+). Its pathway is purine metabolism; IMP biosynthesis via de novo pathway; N(2)-formyl-N(1)-(5-phospho-D-ribosyl)glycinamide from N(1)-(5-phospho-D-ribosyl)glycinamide (formate route): step 1/1. Functionally, involved in the de novo purine biosynthesis. Catalyzes the transfer of formate to 5-phospho-ribosyl-glycinamide (GAR), producing 5-phospho-ribosyl-N-formylglycinamide (FGAR). Formate is provided by PurU via hydrolysis of 10-formyl-tetrahydrofolate. The chain is Formate-dependent phosphoribosylglycinamide formyltransferase from Burkholderia lata (strain ATCC 17760 / DSM 23089 / LMG 22485 / NCIMB 9086 / R18194 / 383).